Consider the following 1124-residue polypeptide: Translation initiation factor IF-2 (1124 aa).

Low complexity predominate over residues 32-41 (IAAKSHSSSI). 2 disordered regions span residues 32 to 451 (IAAK…QKVH) and 480 to 523 (LARP…RAAR). Positions 94 to 104 (ATSSSEISQVK) are enriched in polar residues. Residues 134-173 (VNPTTTPTSSPPKTAARPVNAPISRPATPSRPSAPTPRSA) are compositionally biased toward low complexity. Polar residues predominate over residues 192–203 (GQTSTSSKATTV). Over residues 214–227 (SRPQSPAAPGRSAP) the composition is skewed to low complexity. Composition is skewed to basic and acidic residues over residues 235-246 (SDRKAPKPELVG) and 261-272 (PEPEGQRPDKKR). 2 stretches are compositionally biased toward low complexity: residues 274-283 (GISPRPIGGP) and 411-422 (RPAQAPAAGAPR). Positions 425–439 (GRPDWDDSAKLEALR) are enriched in basic and acidic residues. Basic residues-rich tracts occupy residues 484-493 (AKPKSQKKPA) and 500-514 (LRKR…RQRR). One can recognise a tr-type G domain in the interval 615–787 (RRPPVVTVMG…ILLVTEVEDL (173 aa)). The interval 624 to 631 (GHVDHGKT) is G1. Residue 624 to 631 (GHVDHGKT) participates in GTP binding. Residues 649 to 653 (GITQH) are G2. A G3 region spans residues 674–677 (DTPG). GTP contacts are provided by residues 674–678 (DTPGH) and 728–731 (NKTD). A G4 region spans residues 728–731 (NKTD). The tract at residues 764-766 (SAI) is G5.

Belongs to the TRAFAC class translation factor GTPase superfamily. Classic translation factor GTPase family. IF-2 subfamily.

It is found in the cytoplasm. Its function is as follows. One of the essential components for the initiation of protein synthesis. Protects formylmethionyl-tRNA from spontaneous hydrolysis and promotes its binding to the 30S ribosomal subunits. Also involved in the hydrolysis of GTP during the formation of the 70S ribosomal complex. This Prochlorococcus marinus (strain MIT 9303) protein is Translation initiation factor IF-2.